The primary structure comprises 130 residues: Small ribosomal subunit protein bS6 (130 aa).

The tract at residues 100–130 is disordered; the sequence is SPMVKAKDERRERREDFAEAGDDVDAGDSEE. A compositionally biased stretch (basic and acidic residues) spans 104–116; it reads KAKDERRERREDF. Over residues 117–130 the composition is skewed to acidic residues; the sequence is AEAGDDVDAGDSEE.

This sequence belongs to the bacterial ribosomal protein bS6 family.

Functionally, binds together with bS18 to 16S ribosomal RNA. This chain is Small ribosomal subunit protein bS6, found in Pectobacterium carotovorum subsp. carotovorum (strain PC1).